The sequence spans 520 residues: ATP-dependent clpX-like chaperone, mitochondrial (520 aa).

Residues 1–13 constitute a mitochondrion transit peptide; that stretch reads MLKSASQNFFRAY. Residue 140-147 participates in ATP binding; sequence GPSGSGKT.

It belongs to the ClpX chaperone family. As to quaternary structure, homohexamer that forms a ring structure; this hexamerization requires ATP binding. Interacts with HEM1.

The protein localises to the mitochondrion inner membrane. In terms of biological role, ATP-dependent unfoldase that stimulates the incorporation of the pyridoxal phosphate cofactor into 5-aminolevulinate synthase (HEM1), thereby activating 5-aminolevulinate (ALA) synthesis, the first step in heme biosynthesis. Up-regulates heme biosynthesis. The protein is ATP-dependent clpX-like chaperone, mitochondrial of Saccharomyces cerevisiae (strain ATCC 204508 / S288c) (Baker's yeast).